Reading from the N-terminus, the 147-residue chain is Small ribosomal subunit protein uS5 (147 aa).

The S5 DRBM domain maps to 9–72 (FEEVVVNISR…DNAFKNITTV (64 aa)).

This sequence belongs to the universal ribosomal protein uS5 family. In terms of assembly, part of the 30S ribosomal subunit. Contacts proteins S4 and S8.

Its function is as follows. With S4 and S12 plays an important role in translational accuracy. Located at the back of the 30S subunit body where it stabilizes the conformation of the head with respect to the body. This Nitratiruptor sp. (strain SB155-2) protein is Small ribosomal subunit protein uS5.